A 430-amino-acid polypeptide reads, in one-letter code: Enolase (430 aa).

Residue Gln-165 participates in (2R)-2-phosphoglycerate binding. Glu-207 acts as the Proton donor in catalysis. The Mg(2+) site is built by Asp-244, Glu-287, and Asp-314. 4 residues coordinate (2R)-2-phosphoglycerate: Lys-339, Arg-368, Ser-369, and Lys-390. Lys-339 functions as the Proton acceptor in the catalytic mechanism.

Belongs to the enolase family. In terms of assembly, component of the RNA degradosome, a multiprotein complex involved in RNA processing and mRNA degradation. Requires Mg(2+) as cofactor.

The protein localises to the cytoplasm. Its subcellular location is the secreted. It localises to the cell surface. It carries out the reaction (2R)-2-phosphoglycerate = phosphoenolpyruvate + H2O. The protein operates within carbohydrate degradation; glycolysis; pyruvate from D-glyceraldehyde 3-phosphate: step 4/5. Its function is as follows. Catalyzes the reversible conversion of 2-phosphoglycerate (2-PG) into phosphoenolpyruvate (PEP). It is essential for the degradation of carbohydrates via glycolysis. This is Enolase from Xylella fastidiosa (strain 9a5c).